Consider the following 155-residue polypeptide: Small ribosomal subunit protein uS7 (155 aa).

This sequence belongs to the universal ribosomal protein uS7 family. As to quaternary structure, part of the 30S ribosomal subunit. Contacts proteins S9 and S11.

Functionally, one of the primary rRNA binding proteins, it binds directly to 16S rRNA where it nucleates assembly of the head domain of the 30S subunit. Is located at the subunit interface close to the decoding center, probably blocks exit of the E-site tRNA. The sequence is that of Small ribosomal subunit protein uS7 from Thermotoga neapolitana (strain ATCC 49049 / DSM 4359 / NBRC 107923 / NS-E).